A 524-amino-acid polypeptide reads, in one-letter code: Methyl-CpG-binding domain-containing protein 8 (524 aa).

The segment covering 45–60 (CSSLSPSSSASLAASA) has biased composition (low complexity). The tract at residues 45–151 (CSSLSPSSSA…EEELEDNEGQ (107 aa)) is disordered. Polar residues predominate over residues 75–84 (FNESAGSRKQ). Residues 106–116 (RQRDDSSREEQ) are compositionally biased toward basic and acidic residues. The segment covering 136–149 (EEEDEGEEELEDNE) has biased composition (acidic residues). The region spanning 334–406 (VVNACDYGGY…QHYYLQSDNK (73 aa)) is the MBD domain.

Expressed in shoot meristems, roots (vasculature and tips), hypocotyls (vasculature), cotyledons (vasculature and hydathodes), young leaves, buds, flowers and stems. Detected in stomata.

The protein resides in the nucleus. In terms of biological role, probable transcriptional regulator. May regulates developmental traits such as flowering time. The polypeptide is Methyl-CpG-binding domain-containing protein 8 (MBD8) (Arabidopsis thaliana (Mouse-ear cress)).